Consider the following 624-residue polypeptide: Chaperone protein DnaK (624 aa).

T174 bears the Phosphothreonine; by autocatalysis mark. Disordered stretches follow at residues I470–V504 and N577–K624. Over residues E481–V504 the composition is skewed to basic and acidic residues. A compositionally biased stretch (low complexity) spans N577–D605. Residues G615 to K624 show a composition bias toward basic and acidic residues.

This sequence belongs to the heat shock protein 70 family.

Its function is as follows. Acts as a chaperone. The polypeptide is Chaperone protein DnaK (Lactobacillus johnsonii (strain CNCM I-12250 / La1 / NCC 533)).